Consider the following 594-residue polypeptide: Probable methylenetetrahydrofolate reductase (NADH) (594 aa).

Glu-21 acts as the Proton donor/acceptor in catalysis. NAD(+) is bound by residues 21-26 (EYFPPK) and 52-53 (TW). FAD is bound by residues 52–53 (TW), His-81, 111–113 (RGD), Tyr-153, 157–160 (HPDA), Asp-175, and Lys-182. Asp-113 contacts substrate. Substrate-binding residues include Gln-193 and Tyr-285.

It belongs to the methylenetetrahydrofolate reductase family. In terms of assembly, homodimer. FAD is required as a cofactor.

It catalyses the reaction (6S)-5-methyl-5,6,7,8-tetrahydrofolate + NAD(+) = (6R)-5,10-methylene-5,6,7,8-tetrahydrofolate + NADH + H(+). It functions in the pathway one-carbon metabolism; tetrahydrofolate interconversion. With respect to regulation, plant MTHFRs strongly prefer NADH over NADPH. Not inhibited by methionine or S-adenosylmethionine. In terms of biological role, the probable reversibility of the MTHFR reaction in plants suggests that they can metabolize the methyl group of 5,10-methylenetetrahydrofolate to serine, sugars and starch. This chain is Probable methylenetetrahydrofolate reductase (NADH), found in Oryza sativa subsp. japonica (Rice).